The sequence spans 265 residues: NAD kinase 1 (265 aa).

D45 (proton acceptor) is an active-site residue. Residues 45-46 (DG), H50, 122-123 (NE), R148, D150, and A185 contribute to the NAD(+) site.

This sequence belongs to the NAD kinase family. It depends on a divalent metal cation as a cofactor.

It localises to the cytoplasm. The enzyme catalyses NAD(+) + ATP = ADP + NADP(+) + H(+). Its function is as follows. Involved in the regulation of the intracellular balance of NAD and NADP, and is a key enzyme in the biosynthesis of NADP. Catalyzes specifically the phosphorylation on 2'-hydroxyl of the adenosine moiety of NAD to yield NADP. The chain is NAD kinase 1 from Halalkalibacterium halodurans (strain ATCC BAA-125 / DSM 18197 / FERM 7344 / JCM 9153 / C-125) (Bacillus halodurans).